The primary structure comprises 266 residues: PTS system sorbose-specific EIIC component (266 aa).

The region spanning 1 to 237 (MEISTLQIIA…GGVGVIIALI (237 aa)) is the PTS EIIC type-4 domain. 7 helical membrane passes run 3–23 (ISTL…MGSV), 33–53 (LIAC…VMLG), 79–99 (IISA…IAIA), 100–120 (LPVA…TVVF), 151–171 (VAIP…SSML), 183–203 (QIAG…MMGV), and 219–239 (YLDF…LIYI).

The protein resides in the cell inner membrane. Functionally, the phosphoenolpyruvate-dependent sugar phosphotransferase system (PTS), a major carbohydrate active transport system, catalyzes the phosphorylation of incoming sugar substrates concomitant with their translocation across the cell membrane. The enzyme II SorABFM PTS system is involved in L-sorbose transport. This is PTS system sorbose-specific EIIC component from Klebsiella pneumoniae.